We begin with the raw amino-acid sequence, 390 residues long: Queuine tRNA-ribosyltransferase (390 aa).

The active-site Proton acceptor is the Asp-92. Substrate is bound by residues 92–96, Asp-146, Gln-195, and Gly-222; that span reads DSGGF. Residues 253–259 are RNA binding; sequence GVGTPED. The Nucleophile role is filled by Asp-272. Positions 277 to 281 are RNA binding; important for wobble base 34 recognition; it reads TRNAR. 4 residues coordinate Zn(2+): Cys-310, Cys-312, Cys-315, and His-354.

The protein belongs to the queuine tRNA-ribosyltransferase family. In terms of assembly, homodimer. Within each dimer, one monomer is responsible for RNA recognition and catalysis, while the other monomer binds to the replacement base PreQ1. The cofactor is Zn(2+).

The enzyme catalyses 7-aminomethyl-7-carbaguanine + guanosine(34) in tRNA = 7-aminomethyl-7-carbaguanosine(34) in tRNA + guanine. Its pathway is tRNA modification; tRNA-queuosine biosynthesis. Its function is as follows. Catalyzes the base-exchange of a guanine (G) residue with the queuine precursor 7-aminomethyl-7-deazaguanine (PreQ1) at position 34 (anticodon wobble position) in tRNAs with GU(N) anticodons (tRNA-Asp, -Asn, -His and -Tyr). Catalysis occurs through a double-displacement mechanism. The nucleophile active site attacks the C1' of nucleotide 34 to detach the guanine base from the RNA, forming a covalent enzyme-RNA intermediate. The proton acceptor active site deprotonates the incoming PreQ1, allowing a nucleophilic attack on the C1' of the ribose to form the product. After dissociation, two additional enzymatic reactions on the tRNA convert PreQ1 to queuine (Q), resulting in the hypermodified nucleoside queuosine (7-(((4,5-cis-dihydroxy-2-cyclopenten-1-yl)amino)methyl)-7-deazaguanosine). This chain is Queuine tRNA-ribosyltransferase, found in Paracidovorax citrulli (strain AAC00-1) (Acidovorax citrulli).